The sequence spans 112 residues: Nucleoid-associated protein Pfl01_1806 (112 aa).

The protein belongs to the YbaB/EbfC family. As to quaternary structure, homodimer.

Its subcellular location is the cytoplasm. The protein localises to the nucleoid. Functionally, binds to DNA and alters its conformation. May be involved in regulation of gene expression, nucleoid organization and DNA protection. The protein is Nucleoid-associated protein Pfl01_1806 of Pseudomonas fluorescens (strain Pf0-1).